The following is a 467-amino-acid chain: Probable glutamate decarboxylase gamma (467 aa).

Residue K278 is modified to N6-(pyridoxal phosphate)lysine.

The protein belongs to the group II decarboxylase family. Requires pyridoxal 5'-phosphate as cofactor.

It catalyses the reaction L-glutamate + H(+) = 4-aminobutanoate + CO2. In Listeria innocua serovar 6a (strain ATCC BAA-680 / CLIP 11262), this protein is Probable glutamate decarboxylase gamma.